Here is a 342-residue protein sequence, read N- to C-terminus: BAG family molecular chaperone regulator 1 (342 aa).

The disordered stretch occupies residues 1–41 (MMKMMRNKPTNLPTAGMTNGGRGSGGGGGGGGRESGGRDLE). The segment covering 8–17 (KPTNLPTAGM) has biased composition (polar residues). Gly residues predominate over residues 18 to 34 (TNGGRGSGGGGGGGGRE). Residues 65-141 (PMIRVRIKYG…MVLIEDPLSQ (77 aa)) enclose the Ubiquitin-like domain. The BAG domain maps to 160–238 (AISDISLEVD…NYVETLDALK (79 aa)). S298 carries the phosphoserine modification.

In terms of assembly, binds to the ATPase domain of HSP70/HSC70 chaperones.

Co-chaperone that regulates diverse cellular pathways, such as programmed cell death and stress responses. This Arabidopsis thaliana (Mouse-ear cress) protein is BAG family molecular chaperone regulator 1 (BAG1).